The following is a 217-amino-acid chain: Adenylate kinase (217 aa).

Gly10–Thr15 contributes to the ATP binding site. The tract at residues Ser30 to Val59 is NMP. AMP contacts are provided by residues Thr31, Arg36, Leu57 to Val59, Gly85 to Arg88, and Gln92. The tract at residues Gly126–Asp163 is LID. Arg127 contacts ATP. 2 residues coordinate Zn(2+): Cys130 and Cys133. Ser136 to Tyr137 contacts ATP. Residues Cys150 and Cys153 each coordinate Zn(2+). 2 residues coordinate AMP: Arg160 and Arg171. Glu199 is a binding site for ATP.

This sequence belongs to the adenylate kinase family. As to quaternary structure, monomer.

The protein resides in the cytoplasm. It catalyses the reaction AMP + ATP = 2 ADP. The protein operates within purine metabolism; AMP biosynthesis via salvage pathway; AMP from ADP: step 1/1. Its function is as follows. Catalyzes the reversible transfer of the terminal phosphate group between ATP and AMP. Plays an important role in cellular energy homeostasis and in adenine nucleotide metabolism. The chain is Adenylate kinase from Acetivibrio thermocellus (strain ATCC 27405 / DSM 1237 / JCM 9322 / NBRC 103400 / NCIMB 10682 / NRRL B-4536 / VPI 7372) (Clostridium thermocellum).